We begin with the raw amino-acid sequence, 404 residues long: CCA-adding enzyme (404 aa).

ATP is bound by residues Gly-32 and Arg-35. 2 residues coordinate CTP: Gly-32 and Arg-35. Mg(2+) contacts are provided by Asp-45 and Asp-47. ATP contacts are provided by Arg-116, Asp-159, Arg-162, Arg-165, and Arg-168. CTP is bound by residues Arg-116, Asp-159, Arg-162, Arg-165, and Arg-168.

It belongs to the tRNA nucleotidyltransferase/poly(A) polymerase family. Bacterial CCA-adding enzyme type 3 subfamily. As to quaternary structure, homodimer. The cofactor is Mg(2+).

The enzyme catalyses a tRNA precursor + 2 CTP + ATP = a tRNA with a 3' CCA end + 3 diphosphate. It carries out the reaction a tRNA with a 3' CCA end + 2 CTP + ATP = a tRNA with a 3' CCACCA end + 3 diphosphate. Its function is as follows. Catalyzes the addition and repair of the essential 3'-terminal CCA sequence in tRNAs without using a nucleic acid template. Adds these three nucleotides in the order of C, C, and A to the tRNA nucleotide-73, using CTP and ATP as substrates and producing inorganic pyrophosphate. tRNA 3'-terminal CCA addition is required both for tRNA processing and repair. Also involved in tRNA surveillance by mediating tandem CCA addition to generate a CCACCA at the 3' terminus of unstable tRNAs. While stable tRNAs receive only 3'-terminal CCA, unstable tRNAs are marked with CCACCA and rapidly degraded. The sequence is that of CCA-adding enzyme from Ligilactobacillus salivarius (strain UCC118) (Lactobacillus salivarius).